A 494-amino-acid polypeptide reads, in one-letter code: Glutamate--tRNA ligase (494 aa).

A 'HIGH' region motif is present at residues 15 to 25 (PSPTGNPHVGL). Residues C112, C114, C139, and E141 each contribute to the Zn(2+) site. Positions 260-264 (KLSKR) match the 'KMSKS' region motif. K263 serves as a coordination point for ATP.

The protein belongs to the class-I aminoacyl-tRNA synthetase family. Glutamate--tRNA ligase type 1 subfamily. In terms of assembly, monomer. It depends on Zn(2+) as a cofactor.

It is found in the cytoplasm. The enzyme catalyses tRNA(Glu) + L-glutamate + ATP = L-glutamyl-tRNA(Glu) + AMP + diphosphate. Its function is as follows. Catalyzes the attachment of glutamate to tRNA(Glu) in a two-step reaction: glutamate is first activated by ATP to form Glu-AMP and then transferred to the acceptor end of tRNA(Glu). The protein is Glutamate--tRNA ligase of Streptomyces coelicolor (strain ATCC BAA-471 / A3(2) / M145).